A 266-amino-acid polypeptide reads, in one-letter code: MEFFKYIFYGIIQGLTEFIPISSTAHLKIISLLFGMDDPGSSVSAIIQIGSVFAIFWYFRKSISNYKNTNSRKPSYSFLFNKLNKSIFIGTIPIVFIGVIIKLFVPGFSDSFLRSNLSIALVSILMSLIMLFADISTKKSINLNNHKYPNNLYIGIAQAFAIVPGVSRSGATISMALLSGWNRKDAAKFSFLLGIPSISLAAFVEFFSAVNQFSTFPFLPLFAGLITAFFSSLLAINFLIKYVSSHGLKIFVYYRLIFGILILFNL.

8 helical membrane-spanning segments follow: residues 1–21 (MEFF…FIPI), 39–59 (PGSS…FWYF), 87–107 (IFIG…FVPG), 117–137 (LSIA…DIST), 153–173 (YIGI…GATI), 189–209 (FSFL…FFSA), 216–236 (FPFL…LLAI), and 246–266 (HGLK…LFNL).

This sequence belongs to the UppP family.

Its subcellular location is the cell inner membrane. The enzyme catalyses di-trans,octa-cis-undecaprenyl diphosphate + H2O = di-trans,octa-cis-undecaprenyl phosphate + phosphate + H(+). In terms of biological role, catalyzes the dephosphorylation of undecaprenyl diphosphate (UPP). Confers resistance to bacitracin. The sequence is that of Undecaprenyl-diphosphatase from Prochlorococcus marinus subsp. pastoris (strain CCMP1986 / NIES-2087 / MED4).